The sequence spans 246 residues: Small ribosomal subunit protein uS3 (246 aa).

In terms of domain architecture, KH type-2 spans 38 to 106; sequence IRQYLNARLA…DVQINIYEIR (69 aa). The interval 218 to 246 is disordered; it reads VAKNQSRRPNAQGGNNRGGDRNRRRKGNR.

The protein belongs to the universal ribosomal protein uS3 family. Part of the 30S ribosomal subunit. Forms a tight complex with proteins S10 and S14.

In terms of biological role, binds the lower part of the 30S subunit head. Binds mRNA in the 70S ribosome, positioning it for translation. The sequence is that of Small ribosomal subunit protein uS3 from Porphyromonas gingivalis (strain ATCC 33277 / DSM 20709 / CIP 103683 / JCM 12257 / NCTC 11834 / 2561).